The chain runs to 227 residues: Sensory transduction protein RegX3 (227 aa).

Positions 3-116 (SVLIVEDEES…ELIARIRAVL (114 aa)) constitute a Response regulatory domain. The residue at position 52 (Asp52) is a 4-aspartylphosphate. A DNA-binding region (ompR/PhoB-type) is located at residues 128–227 (DGVLESGPVR…VRGLGYKLEG (100 aa)).

Phosphorylated by SenX3.

In terms of biological role, member of the two-component regulatory system SenX3/RegX3. Specifically binds to the promoter region of the senX3-regX3 operon. This Mycobacterium bovis (strain ATCC BAA-935 / AF2122/97) protein is Sensory transduction protein RegX3.